The sequence spans 454 residues: NADP-specific glutamate dehydrogenase 1 (454 aa).

The active site involves Lys110. NAD(+) is bound at residue 174 to 203 (GVLTGKGLNWGGSLIRPEATGYGLVYYTQA).

Belongs to the Glu/Leu/Phe/Val dehydrogenases family. In terms of assembly, homohexamer.

It carries out the reaction L-glutamate + NADP(+) + H2O = 2-oxoglutarate + NH4(+) + NADPH + H(+). The sequence is that of NADP-specific glutamate dehydrogenase 1 (GDH1) from Saccharomyces uvarum (strain ATCC 76518 / CBS 7001 / CLIB 283 / NBRC 10550 / MCYC 623 / NCYC 2669 / NRRL Y-11845) (Yeast).